A 426-amino-acid polypeptide reads, in one-letter code: Phosphomethylpyrimidine synthase (426 aa).

Residues Asn65, Met94, Tyr123, His162, 184–186 (SRG), 225–228 (DGMR), and Glu264 contribute to the substrate site. His268 contacts Zn(2+). Position 291 (Tyr291) interacts with substrate. His332 contributes to the Zn(2+) binding site. 3 residues coordinate [4Fe-4S] cluster: Cys408, Cys411, and Cys415.

Belongs to the ThiC family. It depends on [4Fe-4S] cluster as a cofactor.

The enzyme catalyses 5-amino-1-(5-phospho-beta-D-ribosyl)imidazole + S-adenosyl-L-methionine = 4-amino-2-methyl-5-(phosphooxymethyl)pyrimidine + CO + 5'-deoxyadenosine + formate + L-methionine + 3 H(+). The protein operates within cofactor biosynthesis; thiamine diphosphate biosynthesis. Functionally, catalyzes the synthesis of the hydroxymethylpyrimidine phosphate (HMP-P) moiety of thiamine from aminoimidazole ribotide (AIR) in a radical S-adenosyl-L-methionine (SAM)-dependent reaction. In Methanococcus maripaludis (strain C5 / ATCC BAA-1333), this protein is Phosphomethylpyrimidine synthase.